Consider the following 633-residue polypeptide: tRNA uridine 5-carboxymethylaminomethyl modification enzyme MnmG (633 aa).

Residue 18–23 participates in FAD binding; that stretch reads GAGHAG. The tract at residues 208–232 is disordered; it reads PRVNGNTIDFDKTEEQPGDKTPNHF. Positions 216–229 are enriched in basic and acidic residues; that stretch reads DFDKTEEQPGDKTP. 279–293 is a binding site for NAD(+); sequence GPRYCPSIEDKIVRF.

The protein belongs to the MnmG family. In terms of assembly, homodimer. Heterotetramer of two MnmE and two MnmG subunits. The cofactor is FAD.

The protein resides in the cytoplasm. Functionally, NAD-binding protein involved in the addition of a carboxymethylaminomethyl (cmnm) group at the wobble position (U34) of certain tRNAs, forming tRNA-cmnm(5)s(2)U34. The chain is tRNA uridine 5-carboxymethylaminomethyl modification enzyme MnmG from Lacticaseibacillus paracasei (strain ATCC 334 / BCRC 17002 / CCUG 31169 / CIP 107868 / KCTC 3260 / NRRL B-441) (Lactobacillus paracasei).